A 414-amino-acid chain; its full sequence is Esterase FrsA (414 aa).

It belongs to the FrsA family.

The enzyme catalyses a carboxylic ester + H2O = an alcohol + a carboxylate + H(+). In terms of biological role, catalyzes the hydrolysis of esters. This chain is Esterase FrsA, found in Escherichia coli O139:H28 (strain E24377A / ETEC).